The chain runs to 462 residues: Bindin (462 aa).

Residues 1-19 form the signal peptide; the sequence is MARQLSVILVALTLTTALA. A propeptide spanning residues 20–244 is cleaved from the precursor; it reads ENFPTRTSAP…DSGRSARKKR (225 aa). Disordered regions lie at residues 155–194 and 221–278; these read DDRR…APKD and RTRR…QGMG. Positions 372 to 380 are fucose-binding domain; it reads LRHLRHHSN.

The protein belongs to the bindin family.

The protein localises to the cytoplasmic vesicle. It localises to the secretory vesicle. Its subcellular location is the acrosome lumen. Functionally, species-specific sea urchin sperm protein required for adhesion of sperm to the egg surface during fertilization. Bindin coats the acrosomal process after it is externalized by the acrosome reaction. It binds to sulfated, fucose-containing polysaccharides on the vitelline layer receptor proteoglycans which cover the egg plasma membrane. The protein is Bindin of Lytechinus variegatus (Green sea urchin).